The primary structure comprises 534 residues: ATP-dependent RNA helicase DBP3 (534 aa).

Residues 1–96 (MGSKRKHESG…VSSSSSGYTQ (96 aa)) are disordered. Basic and acidic residues predominate over residues 8-30 (ESGDVEVKKPKHDNEVKGKEKKE). A compositionally biased stretch (basic residues) spans 31–53 (KKEKKEKKEKKEKKEKKEKKEKK). Basic and acidic residues predominate over residues 54–63 (EKKEKNEKKE). The segment covering 82–92 (STVSTVSSSSS) has biased composition (low complexity). A Q motif motif is present at residues 131 to 157 (LSFDHVQLQSKIAPIVTKFPKPTPIQS). The 171-residue stretch at 160 to 330 (WPYLLNGDDV…ATFMNKAVKV (171 aa)) folds into the Helicase ATP-binding domain. Position 173 to 180 (173 to 180 (AETGSGKT)) interacts with ATP. The DEAD box motif lies at 278 to 281 (DEAD). The Helicase C-terminal domain occupies 359-504 (RLLQLLRQYG…PVPDELLKFG (146 aa)).

It belongs to the DEAD box helicase family. DDX5/DBP2 subfamily.

It localises to the nucleus. The protein localises to the nucleolus. The enzyme catalyses ATP + H2O = ADP + phosphate + H(+). Functionally, ATP-dependent RNA helicase required for 60S ribosomal subunit synthesis. Involved in efficient pre-rRNA processing, predominantly at site A3, which is necessary for the normal formation of 25S and 5.8S rRNAs. This is ATP-dependent RNA helicase DBP3 (DBP3) from Meyerozyma guilliermondii (strain ATCC 6260 / CBS 566 / DSM 6381 / JCM 1539 / NBRC 10279 / NRRL Y-324) (Yeast).